The primary structure comprises 102 residues: Small ribosomal subunit protein uS10 (102 aa).

This sequence belongs to the universal ribosomal protein uS10 family. Part of the 30S ribosomal subunit.

Functionally, involved in the binding of tRNA to the ribosomes. In Bifidobacterium adolescentis (strain ATCC 15703 / DSM 20083 / NCTC 11814 / E194a), this protein is Small ribosomal subunit protein uS10.